The following is a 401-amino-acid chain: Imidazolonepropionase (401 aa).

Residues histidine 66 and histidine 68 each contribute to the Fe(3+) site. Residues histidine 66 and histidine 68 each coordinate Zn(2+). Positions 75, 138, and 171 each coordinate 4-imidazolone-5-propanoate. Residue tyrosine 138 participates in N-formimidoyl-L-glutamate binding. Histidine 236 is a binding site for Fe(3+). A Zn(2+)-binding site is contributed by histidine 236. Glutamine 239 provides a ligand contact to 4-imidazolone-5-propanoate. Fe(3+) is bound at residue aspartate 311. Residue aspartate 311 coordinates Zn(2+). Asparagine 313 and glycine 315 together coordinate N-formimidoyl-L-glutamate. A 4-imidazolone-5-propanoate-binding site is contributed by threonine 316.

Belongs to the metallo-dependent hydrolases superfamily. HutI family. Zn(2+) is required as a cofactor. The cofactor is Fe(3+).

The protein localises to the cytoplasm. The enzyme catalyses 4-imidazolone-5-propanoate + H2O = N-formimidoyl-L-glutamate. It functions in the pathway amino-acid degradation; L-histidine degradation into L-glutamate; N-formimidoyl-L-glutamate from L-histidine: step 3/3. Catalyzes the hydrolytic cleavage of the carbon-nitrogen bond in imidazolone-5-propanoate to yield N-formimidoyl-L-glutamate. It is the third step in the universal histidine degradation pathway. This chain is Imidazolonepropionase, found in Pseudomonas fluorescens (strain Pf0-1).